Here is a 255-residue protein sequence, read N- to C-terminus: Diphthine synthase (255 aa).

Residues leucine 9, aspartate 85, valine 88, 113 to 114 (SI), leucine 164, alanine 207, and histidine 232 contribute to the S-adenosyl-L-methionine site.

This sequence belongs to the diphthine synthase family. Homodimer.

The enzyme catalyses 2-[(3S)-amino-3-carboxypropyl]-L-histidyl-[translation elongation factor 2] + 3 S-adenosyl-L-methionine = diphthine-[translation elongation factor 2] + 3 S-adenosyl-L-homocysteine + 3 H(+). Its pathway is protein modification; peptidyl-diphthamide biosynthesis. S-adenosyl-L-methionine-dependent methyltransferase that catalyzes the trimethylation of the amino group of the modified target histidine residue in translation elongation factor 2 (EF-2), to form an intermediate called diphthine. The three successive methylation reactions represent the second step of diphthamide biosynthesis. This chain is Diphthine synthase, found in Methanococcus maripaludis (strain C6 / ATCC BAA-1332).